The following is a 160-amino-acid chain: Cyclic pyranopterin monophosphate synthase (160 aa).

Substrate is bound by residues 75–77 and 113–114; these read LCH and ME. Asp-128 is a catalytic residue.

This sequence belongs to the MoaC family. As to quaternary structure, homohexamer; trimer of dimers.

It catalyses the reaction (8S)-3',8-cyclo-7,8-dihydroguanosine 5'-triphosphate = cyclic pyranopterin phosphate + diphosphate. Its pathway is cofactor biosynthesis; molybdopterin biosynthesis. Its function is as follows. Catalyzes the conversion of (8S)-3',8-cyclo-7,8-dihydroguanosine 5'-triphosphate to cyclic pyranopterin monophosphate (cPMP). The polypeptide is Cyclic pyranopterin monophosphate synthase (Methylobacterium sp. (strain 4-46)).